The sequence spans 934 residues: ATP-dependent RNA helicase dbp-10 (934 aa).

The interval 21-43 (LFNNDSDFEDNSSKHHTKKGAVT) is disordered. The Q motif motif lies at 99 to 127 (GGFQAMGLNAHLLRAITRKGFSVPTPIQR). A Helicase ATP-binding domain is found at 130–302 (IPLILERKDV…RAGLQEPSLV (173 aa)). 143-150 (ARTGSGKT) is an ATP binding site. The short motif at 250 to 253 (DEAD) is the DEAD box element. Disordered regions lie at residues 343–370 (GPPE…NPKE), 613–722 (ELGP…FQDP), and 851–934 (GAQP…RQKR). The region spanning 359–513 (KRKREYRPNP…KNPSFAADVV (155 aa)) is the Helicase C-terminal domain. 2 stretches are compositionally biased toward acidic residues: residues 644–654 (DEDDEDVDMED) and 662–700 (EETN…DSEM). The segment covering 864-926 (EKAPKDADKF…VAEKKREKNA (63 aa)) has biased composition (basic and acidic residues).

The protein belongs to the DEAD box helicase family. DDX54/DBP10 subfamily.

Its subcellular location is the nucleus. The protein localises to the nucleolus. The enzyme catalyses ATP + H2O = ADP + phosphate + H(+). Functionally, ATP-binding RNA helicase involved in the biogenesis of 60S ribosomal subunits and is required for the normal formation of 25S and 5.8S rRNAs. The chain is ATP-dependent RNA helicase dbp-10 (dbp-10) from Neurospora crassa (strain ATCC 24698 / 74-OR23-1A / CBS 708.71 / DSM 1257 / FGSC 987).